Reading from the N-terminus, the 384-residue chain is Putative odorant receptor 98b (384 aa).

At 1–34 the chain is on the cytoplasmic side; the sequence is MLTDKFLRLQSALFRLLGLELLHEQDVGHRYPWR. A helical transmembrane segment spans residues 35–55; sequence SICCILSVASFMPLTIAFGLQ. At 56–66 the chain is on the extracellular side; that stretch reads NVQNVEQLTDS. The helical transmembrane segment at 67-87 threads the bilayer; the sequence is LCSVLVDLLALCKIGLFLWLY. Residues 88–128 are Cytoplasmic-facing; the sequence is KDFKFLIGQFYCVLQTETHTAVAEMIVTRESRRDQFISAMY. The chain crosses the membrane as a helical span at residues 129–149; the sequence is AYCFITAGLSACLMSPLSMLI. Topologically, residues 150–177 are extracellular; sequence SYQRTGELQPKFPFPSVYPWDNMKLSNY. Residues 178–198 traverse the membrane as a helical segment; that stretch reads IISYFWNVCAALGVALPTVCV. The Cytoplasmic segment spans residues 199-258; the sequence is DTLFCSLSHNLCALFQIARHKMMHFEGRNTKETHENLKHVFQLYALCLNLGHFLNEYFRP. A helical membrane pass occupies residues 259 to 279; sequence LICQFVAASLHLCVLCYQLSA. Over 280–284 the chain is Extracellular; that stretch reads NILQP. A helical membrane pass occupies residues 285–305; sequence ALLFYAAFTAAVVGQVSIYCF. Residues 306–329 lie on the Cytoplasmic side of the membrane; sequence CGSSIHSECQLFGQAIYESSWPHL. The helical transmembrane segment at 330–350 threads the bilayer; it reads LQENLQLVSSLKIAMMRSSLG. The Extracellular portion of the chain corresponds to 351–384; that stretch reads CPIDGYFFEANRETLITVSKAFIKVSKKTPQVND.

This sequence belongs to the insect chemoreceptor superfamily. Heteromeric odorant receptor channel (TC 1.A.69) family. Or1a subfamily. As to quaternary structure, interacts with Orco. Complexes exist early in the endomembrane system in olfactory sensory neurons (OSNs), coupling these complexes to the conserved ciliary trafficking pathway.

The protein localises to the cell membrane. Functionally, odorant receptor which mediates acceptance or avoidance behavior, depending on its substrates. The odorant receptor repertoire encodes a large collection of odor stimuli that vary widely in identity, intensity, and duration. May form a complex with Orco to form odorant-sensing units, providing sensitive and prolonged odorant signaling and calcium permeability. This is Putative odorant receptor 98b (Or98b) from Drosophila melanogaster (Fruit fly).